We begin with the raw amino-acid sequence, 446 residues long: Chromosomal replication initiator protein DnaA (446 aa).

The tract at residues 1 to 72 (MENILDLWNQ…ADTIYELTGE (72 aa)) is domain I, interacts with DnaA modulators. The tract at residues 72–109 (EELSVKFVIPQNQDEENFLPKPQVKKAAKEEPSDFPQS) is domain II. Residues 110–326 (MLNPKYTFDT…GALIRVVAYS (217 aa)) are domain III, AAA+ region. The ATP site is built by Gly154, Gly156, Lys157, and Thr158. The interval 327-446 (SLINKDINAD…QVKEIKELLK (120 aa)) is domain IV, binds dsDNA.

Belongs to the DnaA family. As to quaternary structure, oligomerizes as a right-handed, spiral filament on DNA at oriC.

The protein localises to the cytoplasm. Functionally, plays an essential role in the initiation and regulation of chromosomal replication. ATP-DnaA binds to the origin of replication (oriC) to initiate formation of the DNA replication initiation complex once per cell cycle. Binds the DnaA box (a 9 base pair repeat at the origin) and separates the double-stranded (ds)DNA. Forms a right-handed helical filament on oriC DNA; dsDNA binds to the exterior of the filament while single-stranded (ss)DNA is stabiized in the filament's interior. The ATP-DnaA-oriC complex binds and stabilizes one strand of the AT-rich DNA unwinding element (DUE), permitting loading of DNA polymerase. After initiation quickly degrades to an ADP-DnaA complex that is not apt for DNA replication. Binds acidic phospholipids. The chain is Chromosomal replication initiator protein DnaA from Bacillus velezensis (strain DSM 23117 / BGSC 10A6 / LMG 26770 / FZB42) (Bacillus amyloliquefaciens subsp. plantarum).